The following is a 478-amino-acid chain: BTB/POZ domain-containing protein 17 (478 aa).

The signal sequence occupies residues 1–28; sequence MLRKGSCKPGSWGSFWAILALVGLVTRA. N-linked (GlcNAc...) asparagine glycans are attached at residues Asn61, Asn100, Asn195, and Asn307. The BTB domain occupies 63–132; it reads SDVILRVQAV…LYCGELTVLL (70 aa). Residues 169–269 enclose the BACK domain; it reads AVGWYHYAVS…IPPAQLFQLQ (101 aa).

It is found in the secreted. This chain is BTB/POZ domain-containing protein 17 (Btbd17), found in Mus musculus (Mouse).